A 183-amino-acid chain; its full sequence is Gamma-crystallin N (183 aa).

4 Beta/gamma crystallin 'Greek key' domains span residues 6-46 (GKII…RVET), 47-89 (GAWI…KPVR), 95-136 (YRLE…KVYG), and 138-180 (GAWV…RRVV).

It belongs to the beta/gamma-crystallin family. As to quaternary structure, monomer.

Functionally, crystallins are the dominant structural components of the vertebrate eye lens. This chain is Gamma-crystallin N (crygn), found in Xenopus tropicalis (Western clawed frog).